A 236-amino-acid chain; its full sequence is C-&gt;U-editing enzyme APOBEC-1 (236 aa).

The CMP/dCMP-type deaminase domain maps to 10 to 134 (KDYTLRRRIE…RRNRQGLKDL (125 aa)). His-61 lines the Zn(2+) pocket. The Proton donor role is filled by Glu-63. Zn(2+)-binding residues include Cys-93 and Cys-96.

The protein belongs to the cytidine and deoxycytidylate deaminase family. In terms of assembly, homodimer. Interacts with A1CF; form an mRNA editing complex. Interacts with RBM47; form an mRNA editing complex. Found in a complex with CELF2/CUGBP2 and A1CF. Interacts with HNRPAB. Interacts with SYNCRIP. Zn(2+) is required as a cofactor. In terms of tissue distribution, expressed exclusively in the intestine.

The protein resides in the cytoplasm. It is found in the nucleus. The enzyme catalyses a cytidine in mRNA + H2O + H(+) = a uridine in mRNA + NH4(+). It catalyses the reaction cytidine(6666) in apoB mRNA + H2O + H(+) = uridine(6666) in apoB mRNA + NH4(+). Functionally, cytidine deaminase catalyzing the cytidine to uridine postranscriptional editing of a variety of mRNAs. Form complexes with cofactors that confer differential editing activity and selectivity. Responsible for the postranscriptional editing of a CAA codon for Gln to a UAA codon for stop in the apolipoprotein B mRNA. Also involved in CGA (Arg) to UGA (Stop) editing in the NF1 mRNA. May also play a role in the epigenetic regulation of gene expression by participating in DNA demethylation. In Oryctolagus cuniculus (Rabbit), this protein is C-&gt;U-editing enzyme APOBEC-1.